The sequence spans 225 residues: Ribosomal RNA small subunit methyltransferase G (225 aa).

S-adenosyl-L-methionine is bound by residues Gly84, Phe89, 107–109 (DST), 135–136 (AE), and Arg154.

It belongs to the methyltransferase superfamily. RNA methyltransferase RsmG family.

The protein resides in the cytoplasm. Specifically methylates the N7 position of a guanine in 16S rRNA. The chain is Ribosomal RNA small subunit methyltransferase G from Microcystis aeruginosa (strain NIES-843 / IAM M-2473).